The primary structure comprises 404 residues: Cytochrome b561 and DOMON domain-containing protein At2g04850 (404 aa).

The N-terminal stretch at 1–22 (MATLILSFLLLLLATKLPESLA) is a signal peptide. The DOMON domain occupies 43-173 (QQASIAWTYH…TKIHHVWNRG (131 aa)). In terms of domain architecture, Cytochrome b561 spans 180-380 (SPTIHPTTST…MEVNSWVVFC (201 aa)). The chain crosses the membrane as a helical span at residues 217-237 (VTHGVVNAISWGFLLPAGAVT). The heme b site is built by His-219 and His-255. A helical transmembrane segment spans residues 256-276 (AAIQLTGFLLGTIGFSIGIVL). His-288 serves as a coordination point for heme b. A helical transmembrane segment spans residues 290-310 (SLGIATFTAAALQTLALLFRP). His-324 contributes to the heme b binding site. 2 helical membrane passes run 326 to 346 (FVGY…FEVL) and 359 to 379 (LCLS…WVVF).

Heme b is required as a cofactor.

It is found in the membrane. May act as a catecholamine-responsive trans-membrane electron transporter. The chain is Cytochrome b561 and DOMON domain-containing protein At2g04850 from Arabidopsis thaliana (Mouse-ear cress).